A 355-amino-acid polypeptide reads, in one-letter code: Heavy metal-associated isoprenylated plant protein 7 (355 aa).

Positions 1-58 (MGEEEKKPEAAEEKKMEEKKPEEKKEGEDKKVDAEKKGEDSDKKPQEGESNKDSKEDS) are enriched in basic and acidic residues. The tract at residues 1–74 (MGEEEKKPEA…APAPPPPPQE (74 aa)) is disordered. The span at 63 to 73 (PEAPAPPPPPQ) shows a compositional bias: pro residues. HMA domains are found at residues 72-136 (PQEV…HRQV) and 170-234 (VVTV…KHAA). 2 residues coordinate a metal cation: cysteine 83 and cysteine 86. A disordered region spans residues 132–157 (THRQVQLLSPIPPPPPPPEKKAEEDK). The a metal cation site is built by cysteine 181 and cysteine 184. A disordered region spans residues 235 to 308 (IMKIDPPPPP…GGGEEEGKVV (74 aa)). The segment covering 254–293 (EGEKKEEEKGEGESKGEEGKDDKAKTDEEKKEGDGGKGEG) has biased composition (basic and acidic residues). Cysteine 352 carries the cysteine methyl ester modification. A lipid anchor (S-farnesyl cysteine) is attached at cysteine 352. The propeptide at 353–355 (TVM) is removed in mature form.

Belongs to the HIPP family. Post-translationally, efficiently farnesylated in vitro.

In terms of biological role, heavy-metal-binding protein. Binds zinc, copper and nickel in a reversible manner. The sequence is that of Heavy metal-associated isoprenylated plant protein 7 from Arabidopsis thaliana (Mouse-ear cress).